The chain runs to 280 residues: Ribosomal RNA small subunit methyltransferase A (280 aa).

6 residues coordinate S-adenosyl-L-methionine: N28, L30, G55, E77, D103, and N122.

Belongs to the class I-like SAM-binding methyltransferase superfamily. rRNA adenine N(6)-methyltransferase family. RsmA subfamily.

The protein resides in the cytoplasm. The catalysed reaction is adenosine(1518)/adenosine(1519) in 16S rRNA + 4 S-adenosyl-L-methionine = N(6)-dimethyladenosine(1518)/N(6)-dimethyladenosine(1519) in 16S rRNA + 4 S-adenosyl-L-homocysteine + 4 H(+). In terms of biological role, specifically dimethylates two adjacent adenosines (A1518 and A1519) in the loop of a conserved hairpin near the 3'-end of 16S rRNA in the 30S particle. May play a critical role in biogenesis of 30S subunits. This Ruegeria sp. (strain TM1040) (Silicibacter sp.) protein is Ribosomal RNA small subunit methyltransferase A.